Here is a 389-residue protein sequence, read N- to C-terminus: 26S proteasome regulatory subunit 10B (389 aa).

The residue at position 72 (Lys-72) is an N6-acetyllysine. 174 to 181 (GPPGTGKT) serves as a coordination point for ATP. Residue Lys-206 is modified to N6-acetyllysine. Ser-244 is subject to Phosphoserine.

It belongs to the AAA ATPase family. As to quaternary structure, component of the 19S proteasome regulatory particle complex. The 26S proteasome consists of a 20S core particle (CP) and two 19S regulatory subunits (RP). The regulatory particle is made of a lid composed of 9 subunits, a base containing 6 ATPases including PSMC6 and few additional components. Interacts with PAAF1.

The protein resides in the cytoplasm. Its subcellular location is the nucleus. Component of the 26S proteasome, a multiprotein complex involved in the ATP-dependent degradation of ubiquitinated proteins. This complex plays a key role in the maintenance of protein homeostasis by removing misfolded or damaged proteins, which could impair cellular functions, and by removing proteins whose functions are no longer required. Therefore, the proteasome participates in numerous cellular processes, including cell cycle progression, apoptosis, or DNA damage repair. PSMC6 belongs to the heterohexameric ring of AAA (ATPases associated with diverse cellular activities) proteins that unfolds ubiquitinated target proteins that are concurrently translocated into a proteolytic chamber and degraded into peptides. This is 26S proteasome regulatory subunit 10B (PSMC6) from Bos taurus (Bovine).